We begin with the raw amino-acid sequence, 218 residues long: Histidine biosynthesis bifunctional protein HisIE (218 aa).

The phosphoribosyl-AMP cyclohydrolase stretch occupies residues 1–131 (MAPHQFKSKG…GDYDLPPADT (131 aa)). Residues 132-218 (LSQVFRVVEE…VYRALQQRRR (87 aa)) form a phosphoribosyl-ATP pyrophosphohydrolase region.

In the N-terminal section; belongs to the PRA-CH family. This sequence in the C-terminal section; belongs to the PRA-PH family.

It localises to the cytoplasm. The enzyme catalyses 1-(5-phospho-beta-D-ribosyl)-ATP + H2O = 1-(5-phospho-beta-D-ribosyl)-5'-AMP + diphosphate + H(+). The catalysed reaction is 1-(5-phospho-beta-D-ribosyl)-5'-AMP + H2O = 1-(5-phospho-beta-D-ribosyl)-5-[(5-phospho-beta-D-ribosylamino)methylideneamino]imidazole-4-carboxamide. The protein operates within amino-acid biosynthesis; L-histidine biosynthesis; L-histidine from 5-phospho-alpha-D-ribose 1-diphosphate: step 2/9. It participates in amino-acid biosynthesis; L-histidine biosynthesis; L-histidine from 5-phospho-alpha-D-ribose 1-diphosphate: step 3/9. The sequence is that of Histidine biosynthesis bifunctional protein HisIE from Gloeobacter violaceus (strain ATCC 29082 / PCC 7421).